The following is a 295-amino-acid chain: Host-inducible protein A (295 aa).

The segment at 1–20 (MHLDRSDSNGGSSRYTLDHE) is disordered.

This sequence belongs to the NopP family.

This chain is Host-inducible protein A, found in Rhizobium fredii (Sinorhizobium fredii).